The chain runs to 394 residues: Aromatic-amino-acid aminotransferase (394 aa).

Substrate contacts are provided by Gly-34, Tyr-65, Trp-127, and Asn-180. Position 243 is an N6-(pyridoxal phosphate)lysine (Lys-243). Arg-371 is a binding site for substrate.

Belongs to the class-I pyridoxal-phosphate-dependent aminotransferase family. As to quaternary structure, homodimer. Pyridoxal 5'-phosphate is required as a cofactor.

Its subcellular location is the cytoplasm. It carries out the reaction an aromatic L-alpha-amino acid + 2-oxoglutarate = an aromatic oxo-acid + L-glutamate. In terms of biological role, shows activities toward both dicarboxylic and aromatic substrates. The chain is Aromatic-amino-acid aminotransferase (tyrB) from Paracoccus denitrificans.